Consider the following 564-residue polypeptide: CTP synthase (564 aa).

The interval 1 to 272 (MARPKNVKHI…DIRVLKKLGL (272 aa)) is amidoligase domain. A CTP-binding site is contributed by S18. S18 is a UTP binding site. 19 to 24 (SLGKGI) contacts ATP. Residue Y59 coordinates L-glutamine. Residue D76 coordinates ATP. Mg(2+) is bound by residues D76 and E146. Residues 153 to 155 (DIE), 193 to 198 (KTKPTQ), and K229 contribute to the CTP site. Residues 193-198 (KTKPTQ) and K229 contribute to the UTP site. Positions 299–543 (TIAICGKYTE…VAAAKEFAHG (245 aa)) constitute a Glutamine amidotransferase type-1 domain. G363 lines the L-glutamine pocket. C390 acts as the Nucleophile; for glutamine hydrolysis in catalysis. Residues 391 to 394 (LGMQ), E414, and R471 each bind L-glutamine. Residues H516 and E518 contribute to the active site.

This sequence belongs to the CTP synthase family. In terms of assembly, homotetramer.

The catalysed reaction is UTP + L-glutamine + ATP + H2O = CTP + L-glutamate + ADP + phosphate + 2 H(+). It carries out the reaction L-glutamine + H2O = L-glutamate + NH4(+). It catalyses the reaction UTP + NH4(+) + ATP = CTP + ADP + phosphate + 2 H(+). It participates in pyrimidine metabolism; CTP biosynthesis via de novo pathway; CTP from UDP: step 2/2. Allosterically activated by GTP, when glutamine is the substrate; GTP has no effect on the reaction when ammonia is the substrate. The allosteric effector GTP functions by stabilizing the protein conformation that binds the tetrahedral intermediate(s) formed during glutamine hydrolysis. Inhibited by the product CTP, via allosteric rather than competitive inhibition. Catalyzes the ATP-dependent amination of UTP to CTP with either L-glutamine or ammonia as the source of nitrogen. Regulates intracellular CTP levels through interactions with the four ribonucleotide triphosphates. This is CTP synthase from Prosthecochloris aestuarii (strain DSM 271 / SK 413).